The sequence spans 195 residues: BAG family molecular chaperone regulator 1A (195 aa).

Positions Ser-6–Ile-72 constitute a Ubiquitin-like domain. The disordered stretch occupies residues His-78–Ala-98. Residues Gly-83–Ala-98 show a composition bias toward basic and acidic residues. The 82-residue stretch at Glu-109–Ser-190 folds into the BAG domain.

Binds to the ATPase domain of HSP70/HSC chaperones.

In terms of biological role, inhibits the chaperone activity of HSP70/HSC70 by promoting substrate release. This is BAG family molecular chaperone regulator 1A (bag101) from Schizosaccharomyces pombe (strain 972 / ATCC 24843) (Fission yeast).